Here is a 422-residue protein sequence, read N- to C-terminus: Aliphatic (R)-hydroxynitrile lyase (422 aa).

Positions 63, 85, 115, 118, 121, 129, and 199 each coordinate Zn(2+).

The protein belongs to the zinc-containing alcohol dehydrogenase family. Homodimer. It depends on Zn(2+) as a cofactor.

The catalysed reaction is (2R)-2-hydroxy-2-methylbutanenitrile = butan-2-one + hydrogen cyanide. Its function is as follows. Involved in the catabolism of cyanogenic glycosides. Naturally occurring substrates are the aliphatic acetone cyanohydrin and butan-2-one cyanohydrin, which are the aglycones of the cyanogenic glycosides linamarin, lotaustralin, linustatin and neolinustatin. Can use various aliphatic ketones and aldehydes as substrates, but not aromatic ketones. The polypeptide is Aliphatic (R)-hydroxynitrile lyase (Linum usitatissimum (Flax)).